Consider the following 267-residue polypeptide: MADRRNLFFFYGDDKAKLVEKMKPIYRILEENGFTILDHPKNANAIVSVGDDATFLQAVRKTGFREDCLYAGISTKDEISFYCDFHIDHVDTALQEITKNEIEVRKYPTIEVDVDGSTSFHCLNEFSLRSSIIKTFVVDVHVDDLYFETFRGDGLVVSTPTGSTAYNKSLRGAVVDPLIPCFQVSELASLNNNTYRTLGSPFILNHERTLTLKLRPDGNDYPVIGMDNEALSIKQVEKAVVRLSDKQIKTVKLKNNSFWEKVQRTFL.

The active-site Proton acceptor is the D52. NAD(+) contacts are provided by residues 52-53, 124-125, R151, D153, 164-169, and A188; these read DA, NE, and TAYNKS.

This sequence belongs to the NAD kinase family. It depends on a divalent metal cation as a cofactor.

The protein localises to the cytoplasm. It catalyses the reaction NAD(+) + ATP = ADP + NADP(+) + H(+). Functionally, involved in the regulation of the intracellular balance of NAD and NADP, and is a key enzyme in the biosynthesis of NADP. Catalyzes specifically the phosphorylation on 2'-hydroxyl of the adenosine moiety of NAD to yield NADP. The protein is NAD kinase 2 of Bacillus anthracis.